We begin with the raw amino-acid sequence, 641 residues long: DNA primase (641 aa).

A CHC2-type zinc finger spans residues 41–65 (CPFHDEKSPSFQVSPSKGFFHCFGC). The Toprim domain occupies 262–346 (SRAVVVEGYT…AAETYIAIAP (85 aa)). Mg(2+) is bound by residues E268, D317, and D319. Residues 444–478 (RDRGGKGPAPDQRQRGGGPQQQAGPMTATPRGPAL) are disordered.

The protein belongs to the DnaG primase family. In terms of assembly, monomer. Interacts with DnaB. The cofactor is Zn(2+). Mg(2+) serves as cofactor.

The catalysed reaction is ssDNA + n NTP = ssDNA/pppN(pN)n-1 hybrid + (n-1) diphosphate.. Its function is as follows. RNA polymerase that catalyzes the synthesis of short RNA molecules used as primers for DNA polymerase during DNA replication. The chain is DNA primase from Streptomyces coelicolor (strain ATCC BAA-471 / A3(2) / M145).